The sequence spans 503 residues: ATP-dependent RNA helicase dbp3 (503 aa).

Basic and acidic residues predominate over residues 1–13 (MGKRVSHNEGADR). Positions 1-37 (MGKRVSHNEGADRRPKKKAKNEKPEKETMESPAADVT) are disordered. The Q motif motif lies at 104–112 (SFASPTPIQ). A Helicase ATP-binding domain is found at 116–292 (WPLLFAGRDV…ATFMTSAVTV (177 aa)). Residue 129–136 (AETGSGKT) participates in ATP binding. Positions 239 to 242 (DEAD) match the DEAD box motif. The Helicase C-terminal domain maps to 323 to 472 (RLVQLLSENQ…EVPQELLKFG (150 aa)).

Belongs to the DEAD box helicase family. DDX5/DBP2 subfamily.

It is found in the nucleus. The protein resides in the nucleolus. The enzyme catalyses ATP + H2O = ADP + phosphate + H(+). Its function is as follows. ATP-dependent RNA helicase required for 60S ribosomal subunit synthesis. Involved in efficient pre-rRNA processing, predominantly at site A3, which is necessary for the normal formation of 25S and 5.8S rRNAs. The polypeptide is ATP-dependent RNA helicase dbp3 (dbp3) (Aspergillus clavatus (strain ATCC 1007 / CBS 513.65 / DSM 816 / NCTC 3887 / NRRL 1 / QM 1276 / 107)).